The following is a 645-amino-acid chain: Chaperone protein DnaK (645 aa).

Thr-200 is modified (phosphothreonine; by autocatalysis). The segment at 603–645 is disordered; it reads AYSAQKDSGTSTDSTASDTSGNPEERVVDSEYQEIKKDDEDKK. The segment covering 609-623 has biased composition (low complexity); that stretch reads DSGTSTDSTASDTSG. Basic and acidic residues predominate over residues 625–645; the sequence is PEERVVDSEYQEIKKDDEDKK.

This sequence belongs to the heat shock protein 70 family.

Functionally, acts as a chaperone. This Anaplasma marginale (strain St. Maries) protein is Chaperone protein DnaK.